A 96-amino-acid chain; its full sequence is Co-chaperonin GroES (96 aa).

Belongs to the GroES chaperonin family. In terms of assembly, heptamer of 7 subunits arranged in a ring. Interacts with the chaperonin GroEL.

Its subcellular location is the cytoplasm. Together with the chaperonin GroEL, plays an essential role in assisting protein folding. The GroEL-GroES system forms a nano-cage that allows encapsulation of the non-native substrate proteins and provides a physical environment optimized to promote and accelerate protein folding. GroES binds to the apical surface of the GroEL ring, thereby capping the opening of the GroEL channel. This is Co-chaperonin GroES from Acinetobacter baumannii (strain AB307-0294).